The chain runs to 693 residues: Elongation factor G (693 aa).

The tr-type G domain maps to 8 to 283; the sequence is NKVRNFGIAA…AVCDYLPSPL (276 aa). Residues 17–24, 81–85, and 135–138 contribute to the GTP site; these read AHIDAGKT, DTPGH, and NKMD.

It belongs to the TRAFAC class translation factor GTPase superfamily. Classic translation factor GTPase family. EF-G/EF-2 subfamily.

Its subcellular location is the cytoplasm. Its function is as follows. Catalyzes the GTP-dependent ribosomal translocation step during translation elongation. During this step, the ribosome changes from the pre-translocational (PRE) to the post-translocational (POST) state as the newly formed A-site-bound peptidyl-tRNA and P-site-bound deacylated tRNA move to the P and E sites, respectively. Catalyzes the coordinated movement of the two tRNA molecules, the mRNA and conformational changes in the ribosome. The chain is Elongation factor G from Endomicrobium trichonymphae.